The sequence spans 87 residues: Large ribosomal subunit protein bL27 (87 aa).

The tract at residues 1–20 is disordered; the sequence is MAHKKAGGSSRNGRDSESKR.

Belongs to the bacterial ribosomal protein bL27 family.

This chain is Large ribosomal subunit protein bL27, found in Thiobacillus denitrificans (strain ATCC 25259 / T1).